Here is a 131-residue protein sequence, read N- to C-terminus: Major pollen allergen Pla l 1 (131 aa).

3 disulfides stabilise this stretch: C17–C86, C20–C131, and C42–C74. Residues H21, D45, D73, and E88 each coordinate Zn(2+). N107 carries N-linked (GlcNAc...) asparagine glycosylation.

This sequence belongs to the Ole e I family. In terms of processing, exists in two variants: glycosylated and non-glycosylated. Carries a complex, major N-linked glycan, with a alpha-1,3-fucose residue in its structure and probably also a beta-1,2-xylose. The average modification of molecular mass due to glycosylation is approximately 969 Da.

It is found in the secreted. This chain is Major pollen allergen Pla l 1, found in Plantago lanceolata (English plantain).